The following is a 556-amino-acid chain: Glutamine--tRNA ligase (556 aa).

Residues Pro-34–His-44 carry the 'HIGH' region motif. ATP contacts are provided by residues Glu-35 to Asn-37 and His-41 to Ser-47. L-glutamine-binding residues include Asp-67 and Tyr-212. Residues Thr-231, Arg-261 to Leu-262, and Met-269 to Lys-271 contribute to the ATP site. Positions Val-268 to Arg-272 match the 'KMSKS' region motif.

This sequence belongs to the class-I aminoacyl-tRNA synthetase family. As to quaternary structure, monomer.

Its subcellular location is the cytoplasm. It catalyses the reaction tRNA(Gln) + L-glutamine + ATP = L-glutaminyl-tRNA(Gln) + AMP + diphosphate. This is Glutamine--tRNA ligase from Vibrio vulnificus (strain YJ016).